A 187-amino-acid polypeptide reads, in one-letter code: Peptide deformylase (187 aa).

Cys107 and His149 together coordinate Fe cation. The active site involves Glu150. His153 is a Fe cation binding site.

The protein belongs to the polypeptide deformylase family. Requires Fe(2+) as cofactor.

It carries out the reaction N-terminal N-formyl-L-methionyl-[peptide] + H2O = N-terminal L-methionyl-[peptide] + formate. Functionally, removes the formyl group from the N-terminal Met of newly synthesized proteins. Requires at least a dipeptide for an efficient rate of reaction. N-terminal L-methionine is a prerequisite for activity but the enzyme has broad specificity at other positions. This Synechocystis sp. (strain ATCC 27184 / PCC 6803 / Kazusa) protein is Peptide deformylase.